The following is a 630-amino-acid chain: 1-deoxy-D-xylulose-5-phosphate synthase (630 aa).

Residues His-72 and 113-115 (GHS) each bind thiamine diphosphate. Asp-144 contacts Mg(2+). Residues 145-146 (GA), Asn-173, Tyr-284, and Glu-367 each bind thiamine diphosphate. Asn-173 is a Mg(2+) binding site.

It belongs to the transketolase family. DXPS subfamily. Homodimer. It depends on Mg(2+) as a cofactor. Thiamine diphosphate is required as a cofactor.

The enzyme catalyses D-glyceraldehyde 3-phosphate + pyruvate + H(+) = 1-deoxy-D-xylulose 5-phosphate + CO2. It participates in metabolic intermediate biosynthesis; 1-deoxy-D-xylulose 5-phosphate biosynthesis; 1-deoxy-D-xylulose 5-phosphate from D-glyceraldehyde 3-phosphate and pyruvate: step 1/1. Its function is as follows. Catalyzes the acyloin condensation reaction between C atoms 2 and 3 of pyruvate and glyceraldehyde 3-phosphate to yield 1-deoxy-D-xylulose-5-phosphate (DXP). This chain is 1-deoxy-D-xylulose-5-phosphate synthase, found in Bacillus cereus (strain AH187).